The following is a 377-amino-acid chain: Glutamate 5-kinase (377 aa).

ATP is bound at residue lysine 22. 3 residues coordinate substrate: serine 62, aspartate 149, and asparagine 161. Residues 181–182 (TD) and 223–229 (TGGMVTK) contribute to the ATP site. Positions 285–363 (RGVLVADSGA…AQLRRLLGEE (79 aa)) constitute a PUA domain.

The protein belongs to the glutamate 5-kinase family.

It localises to the cytoplasm. It catalyses the reaction L-glutamate + ATP = L-glutamyl 5-phosphate + ADP. The protein operates within amino-acid biosynthesis; L-proline biosynthesis; L-glutamate 5-semialdehyde from L-glutamate: step 1/2. Its function is as follows. Catalyzes the transfer of a phosphate group to glutamate to form L-glutamate 5-phosphate. This is Glutamate 5-kinase from Bifidobacterium animalis subsp. lactis (strain AD011).